The sequence spans 68 residues: Neuronal regeneration-related protein (68 aa).

As to quaternary structure, interacts with FLNA. Interacts with the latency-associated peptides (LAP) of TGFB1 and TGFB2; the interaction results in a decrease in TGFB autoinduction. Post-translationally, phosphorylated on Ser-59. Phosphorylation decreases stability and activity.

The protein localises to the cytoplasm. Functionally, may have roles in neural function. Ectopic expression promotes axonal regeneration. Also augments motility of gliomas. May also have roles in cellular differentiation. Induces differentiation of fibroblast into myofibroblast and myofibroblast ameboid migration. Increases retinoic-acid regulation of lipid-droplet biogenesis. Down-regulates the expression of TGFB1 and TGFB2 but not of TGFB3. May play a role in the regulation of alveolar generation. The protein is Neuronal regeneration-related protein (Nrep) of Rattus norvegicus (Rat).